Consider the following 88-residue polypeptide: uncharacterized protein (88 aa).

2 helical membrane passes run 27 to 46 (LFIFRVLNVVSIAILFETPH) and 61 to 83 (SMCLYNCYCLYNVVTFSLNLILI).

It is found in the membrane. This is an uncharacterized protein from Saccharomyces cerevisiae (strain ATCC 204508 / S288c) (Baker's yeast).